The sequence spans 713 residues: Subtilisin-like protease SBT4.9 (713 aa).

Positions 1–24 (MARRADSFCLISCVLVSFVISVSA) are cleaved as a signal peptide. A propeptide spans 25 to 113 (VTDDSQDKQV…VFPDINYKLQ (89 aa)) (activation peptide). Residues 34-112 (VYVVYMGSLP…SVFPDINYKL (79 aa)) form the Inhibitor I9 domain. Residues 117 to 560 (SWDFLGLKEG…AGHVDPIAAI (444 aa)) form the Peptidase S8 domain. The active-site Charge relay system is the D145. N-linked (GlcNAc...) asparagine glycosylation occurs at N176. H200 serves as the catalytic Charge relay system. N-linked (GlcNAc...) asparagine glycosylation is found at N215 and N223. Residues 356-415 (NYPLYGGSTDGPLLRGKILVSEDKVSSEIVVANINENYHDYAYVSILPSSALSKDDFDSV) enclose the PA domain. The N-linked (GlcNAc...) asparagine glycan is linked to N420. Residue S499 is the Charge relay system of the active site. N-linked (GlcNAc...) asparagine glycosylation is found at N536, N583, N627, and N637.

Belongs to the peptidase S8 family. In terms of processing, the C-terminal propeptide is autocleaved.

Its subcellular location is the secreted. In Arabidopsis thaliana (Mouse-ear cress), this protein is Subtilisin-like protease SBT4.9.